The primary structure comprises 543 residues: ATP synthase subunit alpha (543 aa).

174–181 lines the ATP pocket; sequence GDRQTGKT.

The protein belongs to the ATPase alpha/beta chains family. In terms of assembly, F-type ATPases have 2 components, CF(1) - the catalytic core - and CF(0) - the membrane proton channel. CF(1) has five subunits: alpha(3), beta(3), gamma(1), delta(1), epsilon(1). CF(0) has three main subunits: a(1), b(2) and c(9-12). The alpha and beta chains form an alternating ring which encloses part of the gamma chain. CF(1) is attached to CF(0) by a central stalk formed by the gamma and epsilon chains, while a peripheral stalk is formed by the delta and b chains.

It is found in the cell membrane. The catalysed reaction is ATP + H2O + 4 H(+)(in) = ADP + phosphate + 5 H(+)(out). In terms of biological role, produces ATP from ADP in the presence of a proton gradient across the membrane. The alpha chain is a regulatory subunit. In Bifidobacterium longum subsp. infantis (strain ATCC 15697 / DSM 20088 / JCM 1222 / NCTC 11817 / S12), this protein is ATP synthase subunit alpha.